The primary structure comprises 37 residues: Large ribosomal subunit protein bL36 (37 aa).

It belongs to the bacterial ribosomal protein bL36 family.

This is Large ribosomal subunit protein bL36 from Marinomonas sp. (strain MWYL1).